The sequence spans 378 residues: C-type lectin domain family 17, member A (378 aa).

Residues 1-119 (MHNLYSITGY…PPLPCKPRNM (119 aa)) form a disordered region. The Cytoplasmic portion of the chain corresponds to 1 to 172 (MHNLYSITGY…GCCQKRWMVY (172 aa)). Composition is skewed to acidic residues over residues 17-27 (MEEEEEDDDYE), 43-53 (MEEEEEDDDYE), and 69-79 (MEEEEEDDDYE). A compositionally biased stretch (pro residues) spans 86–101 (KDLPPKPGSSAPPRPP). Residues 173 to 193 (LCLLVVTSLFLGCLGLTVTLI) form a helical; Signal-anchor for type II membrane protein membrane-spanning segment. Residues 194 to 378 (KYQELMEELR…YWICERKCSC (185 aa)) are Extracellular-facing. Asn215 and Asn237 each carry an N-linked (GlcNAc...) asparagine glycan. 3 disulfides stabilise this stretch: Cys254/Cys265, Cys282/Cys372, and Cys350/Cys364. A C-type lectin domain is found at 261–373 (FEGKCYYFSP…CYKTTYWICE (113 aa)). Asn285 carries N-linked (GlcNAc...) asparagine glycosylation. Ca(2+)-binding residues include Glu341, Asn343, Glu348, Asn360, and Asp361.

As to quaternary structure, oligomer; disulfide-linked. Post-translationally, phosphorylated on tyrosine residues. Expressed on dividing B-cells of germinal centers in various tissues, including lymph nodes, tonsils, stomach, intestine, appendix and spleen.

It is found in the membrane. Its function is as follows. Cell surface receptor which may be involved in carbohydrate-mediated communication between cells in the germinal center. Binds glycans with terminal alpha-linked mannose or fucose residues. The sequence is that of C-type lectin domain family 17, member A (CLEC17A) from Homo sapiens (Human).